Reading from the N-terminus, the 530-residue chain is AarF domain-containing protein kinase 1 (530 aa).

In terms of domain architecture, Protein kinase spans 155-467; the sequence is SFDDTPLGTA…ASSFLNMSRC (313 aa). Residues 161-169 and K183 contribute to the ATP site; that span reads LGTASLAQV. Catalysis depends on D315, which acts as the Proton acceptor.

This sequence belongs to the protein kinase superfamily. ADCK protein kinase family.

The protein resides in the mitochondrion. Functionally, appears to be essential for maintaining mitochondrial cristae formation and mitochondrial function by acting via YME1L1 in a kinase-independent manner to regulate essential mitochondrial structural proteins OPA1 and IMMT. The action of this enzyme is not yet clear. It is not known if it has protein kinase activity and what type of substrate it would phosphorylate (Ser, Thr or Tyr). This Homo sapiens (Human) protein is AarF domain-containing protein kinase 1.